The following is a 116-amino-acid chain: Ribonuclease P protein component (116 aa).

The protein belongs to the RnpA family. In terms of assembly, consists of a catalytic RNA component (M1 or rnpB) and a protein subunit.

The catalysed reaction is Endonucleolytic cleavage of RNA, removing 5'-extranucleotides from tRNA precursor.. Functionally, RNaseP catalyzes the removal of the 5'-leader sequence from pre-tRNA to produce the mature 5'-terminus. It can also cleave other RNA substrates such as 4.5S RNA. The protein component plays an auxiliary but essential role in vivo by binding to the 5'-leader sequence and broadening the substrate specificity of the ribozyme. The sequence is that of Ribonuclease P protein component from Gluconacetobacter diazotrophicus (strain ATCC 49037 / DSM 5601 / CCUG 37298 / CIP 103539 / LMG 7603 / PAl5).